Consider the following 639-residue polypeptide: MSQQETHGFQTEVKQLLHLMIHSLYSNKEIFLRELVSNAADAADKLRYEALTNDALYEGDGELRVRISADKEKGTVTIEDNGIGMTRDGVIEHLGTIAKSGTAEFFKNMSGDESKDSQLIGQFGVGFYSSFIVADRVTVRTRAAGHSADEAVLWESAGEGDFTVETITKQSRGTEITLHLRDDEKEFADDYRLRSIITKYSDHISVPVEMYEEGTPAVEATEEGGEAIPATEGHWKLMNKATALWTRNKSDVSDEEYQEFYKYISHDFTDPLLWSHNRVEGKQEYTSLLYIPAKAPWDMWNRDRKHGLKLFVQRVFVMDDAEQFMPSYLRFVQGLIDSNDLPLNVSREILQDNKVTTALRTAVTKRVLGMLEKLAKNDAEKYQSFWTEFGQVLKEGPAEDFANKERVAGLLRFASTHTGEATANVSLADYVERMKEGQSKIYFIVADSYEAAANSPHLELLRKKGIEVLLMSERIDEWLINHLTEFDGKKLHSVTRGDLELGELEDASEKEAQEKLETESEGLVKRVKDSLGDKVSAVKVTTRLTDTPACVVAGEGEMSTQMIKLMQAAGQDVPESKPTFELNPEHPLVARLNDEQDEQRFAQWSELLLQQALLSEKGSLADPSAFIKLMNQMLLASVK.

Positions 1–347 (MSQQETHGFQ…SNDLPLNVSR (347 aa)) are a; substrate-binding. The tract at residues 348–564 (EILQDNKVTT…EGEMSTQMIK (217 aa)) is b. Residues 565–639 (LMQAAGQDVP…MNQMLLASVK (75 aa)) are c.

It belongs to the heat shock protein 90 family. As to quaternary structure, homodimer.

Its subcellular location is the cytoplasm. In terms of biological role, molecular chaperone. Has ATPase activity. In Shewanella halifaxensis (strain HAW-EB4), this protein is Chaperone protein HtpG.